We begin with the raw amino-acid sequence, 387 residues long: MRTLRRLKFMSSPSLSDLGKREPGAAGTDERGTQQRRACANATWNSIHNGVIAVFQRKGLPDQELFILNEGVRQLLKTELGSFFTEYLQNQLLTKGMVILRDKIRFYEGQKLLDSLAETWDFFFSDVLPTLQAIFYPVQGKEPSVRQLALLHFRNTITLSVKLEDALARSHARVPPAIAQMLLVLQGVHESRGVTEDYLRLETLIQKVVSPYLGTYGLYSNEGPCTHSCILEKRFLRRSRSGDILAKNPVVRSKSYNTPLLNPVAEHEAEGTAASGTSIRRHSVSEMTSCPEPQGFVDTPGQGPSGTFRSSPTPHSGPCPSRLYPPAHSPEQGPGHGSPSTSSPETLVDQILESADSDSEGIFIDFGRGSRSSVSDFEAPGGRPSVV.

Interaction with RICTOR regions lie at residues 10–96 (MSSP…LTKG) and 189–219 (HESRGVTEDYLRLETLIQKVVSPYLGTYGLY). The segment at 13 to 34 (PSLSDLGKREPGAAGTDERGTQ) is disordered. Basic and acidic residues predominate over residues 18–33 (LGKREPGAAGTDERGT). A Phosphoserine modification is found at Ser-253. The segment at 262 to 387 (NPVAEHEAEG…EAPGGRPSVV (126 aa)) is disordered. Polar residues predominate over residues 305 to 314 (SGTFRSSPTP). Ser-373 carries the phosphoserine modification.

The protein belongs to the PROTOR family. In terms of assembly, associated component of the mechanistic target of rapamycin complex 2 (mTORC2). Binds directly to MTOR and RICTOR within the TORC2 complex. Ubiquitously expressed. Expressed at high levels in kidney.

Associated subunit of mTORC2, which regulates cell growth and survival in response to hormonal signals. mTORC2 is activated by growth factors, but, in contrast to mTORC1, seems to be nutrient-insensitive. mTORC2 seems to function upstream of Rho GTPases to regulate the actin cytoskeleton, probably by activating one or more Rho-type guanine nucleotide exchange factors. PRR5 plays an important role in regulation of PDGFRB expression and in modulation of platelet-derived growth factor signaling. May act as a tumor suppressor in breast cancer. The chain is Proline-rich protein 5 from Mus musculus (Mouse).